We begin with the raw amino-acid sequence, 150 residues long: Histone H2A.1 (150 aa).

The residue at position 1 (M1) is an N-acetylmethionine. 2 stretches are compositionally biased toward basic residues: residues 1-24 (MDASTKTKKGAGGRKGGGPRKKSV) and 141-150 (SKAKKSPKKA). Disordered regions lie at residues 1–26 (MDASTKTKKGAGGRKGGGPRKKSVTR) and 128–150 (RKENAAASTPKSPSKAKKSPKKA). 2 short sequence motifs (SPKK motif) span residues 139 to 142 (SPSK) and 146 to 149 (SPKK).

This sequence belongs to the histone H2A family. As to quaternary structure, the nucleosome is a histone octamer containing two molecules each of H2A, H2B, H3 and H4 assembled in one H3-H4 heterotetramer and two H2A-H2B heterodimers. The octamer wraps approximately 147 bp of DNA. As to expression, high expression in root meristematic tissues, moderate in whole shoot and very low in mature leaves.

It is found in the nucleus. The protein resides in the chromosome. In terms of biological role, core component of nucleosome. Nucleosomes wrap and compact DNA into chromatin, limiting DNA accessibility to the cellular machineries which require DNA as a template. Histones thereby play a central role in transcription regulation, DNA repair, DNA replication and chromosomal stability. DNA accessibility is regulated via a complex set of post-translational modifications of histones, also called histone code, and nucleosome remodeling. This is Histone H2A.1 from Pisum sativum (Garden pea).